The sequence spans 689 residues: Glycine--tRNA ligase beta subunit (689 aa).

This sequence belongs to the class-II aminoacyl-tRNA synthetase family. As to quaternary structure, tetramer of two alpha and two beta subunits.

The protein resides in the cytoplasm. The enzyme catalyses tRNA(Gly) + glycine + ATP = glycyl-tRNA(Gly) + AMP + diphosphate. This Pectobacterium atrosepticum (strain SCRI 1043 / ATCC BAA-672) (Erwinia carotovora subsp. atroseptica) protein is Glycine--tRNA ligase beta subunit.